The primary structure comprises 208 residues: uncharacterized protein (208 aa).

This is an uncharacterized protein from Methanocaldococcus jannaschii (strain ATCC 43067 / DSM 2661 / JAL-1 / JCM 10045 / NBRC 100440) (Methanococcus jannaschii).